The sequence spans 180 residues: dCTP deaminase (180 aa).

DCTP contacts are provided by residues 101-106 (KSSFAR) and Asp-117. The Proton donor/acceptor role is filled by Glu-127. 2 residues coordinate dCTP: Tyr-159 and Gln-168.

The protein belongs to the dCTP deaminase family. In terms of assembly, homotrimer.

The enzyme catalyses dCTP + H2O + H(+) = dUTP + NH4(+). The protein operates within pyrimidine metabolism; dUMP biosynthesis; dUMP from dCTP (dUTP route): step 1/2. Functionally, catalyzes the deamination of dCTP to dUTP. This chain is dCTP deaminase, found in Ignicoccus hospitalis (strain KIN4/I / DSM 18386 / JCM 14125).